The following is a 129-amino-acid chain: Tumor necrosis factor receptor superfamily member 12A (129 aa).

An N-terminal signal peptide occupies residues 1 to 27 (MARGSLRRLLRLLVLGLWLALLRSVAG). The Extracellular portion of the chain corresponds to 28-80 (EQAPGTAPCSRGSSWSADLDKCMDCASCRARPHSDFCLGCAAAPPAPFRLLWP). Cystine bridges form between Cys36-Cys49, Cys52-Cys67, and Cys55-Cys64. The stretch at 36-67 (CSRGSSWSADLDKCMDCASCRARPHSDFCLGC) is one TNFR-Cys; atypical repeat. Residues 81-101 (ILGGALSLTFVLGLLSGFLVW) form a helical membrane-spanning segment. Over 102–129 (RRCRRREKFTTPIEETGGEGCPAVALIQ) the chain is Cytoplasmic.

In terms of assembly, associates with TRAF1 and TRAF2, and probably also with TRAF3. As to expression, highly expressed in heart, placenta and kidney. Intermediate expression in lung, skeletal muscle and pancreas.

The protein localises to the membrane. Its function is as follows. Receptor for TNFSF12/TWEAK. Weak inducer of apoptosis in some cell types. Promotes angiogenesis and the proliferation of endothelial cells. May modulate cellular adhesion to matrix proteins. The protein is Tumor necrosis factor receptor superfamily member 12A (TNFRSF12A) of Homo sapiens (Human).